A 393-amino-acid polypeptide reads, in one-letter code: Prokineticin receptor 1 (393 aa).

Over 1–63 (MEITMGVMDE…NSRTFFAAKI (63 aa)) the chain is Extracellular. N-linked (GlcNAc...) asparagine glycans are attached at residues Asn-11, Asn-14, and Asn-36. A helical transmembrane segment spans residues 64–84 (VIGMALVGIMLVCGIGNFIFI). Topologically, residues 85-98 (AALARYKKLRNLTN) are cytoplasmic. A helical transmembrane segment spans residues 99–119 (LLIANLAISDFLVAIVCCPFE). Residues 120–145 (MDYYVVRQLSWEHGHVLCASVNYLRT) are Extracellular-facing. The cysteines at positions 137 and 217 are disulfide-linked. A helical membrane pass occupies residues 146–166 (VSLYVSTNALLAIAIDRYLAI). Residues 167–179 (VHPLRPRMKYQTA) lie on the Cytoplasmic side of the membrane. Residues 180–200 (TGLIALVWVVSILVAIPSAYF) form a helical membrane-spanning segment. At 201–232 (TTETVLVIVKSQEKIFCGQIWPVDQQIYYKSY) the chain is on the extracellular side. Residues 233–253 (FLFIFGIEFVGPVVTMTLCYA) traverse the membrane as a helical segment. The Cytoplasmic segment spans residues 254-282 (RISRELWFKAVPGFQTEQIRKRLRCRRKT). Residues 283–303 (VLVLMCILTAYVLCWAPFYGF) form a helical membrane-spanning segment. At 304–322 (AIVRDFFPTVFVKEKHYLT) the chain is on the extracellular side. A helical transmembrane segment spans residues 323-343 (AFYVVECIAMSNSMINTVCFV). At 344–393 (TVKNNTIKYFKKIMLLHWKASYNGSKSSGDLDLKTTGVPATEEVDCIGLK) the chain is on the cytoplasmic side.

Belongs to the G-protein coupled receptor 1 family.

It localises to the cell membrane. In terms of biological role, receptor for prokineticin 1. Exclusively coupled to the G(q) subclass of heteromeric G proteins. Activation leads to mobilization of calcium, stimulation of phosphoinositide turnover and activation of p44/p42 mitogen-activated protein kinase. May play a role during early pregnancy. The sequence is that of Prokineticin receptor 1 (PROKR1) from Bos taurus (Bovine).